The sequence spans 335 residues: uncharacterized protein (335 aa).

Disordered regions lie at residues 152–179 and 252–271; these read IQLP…TVND and LDLF…SASL. A phosphoserine mark is found at S257 and S260. Residues 257 to 271 are compositionally biased toward polar residues; the sequence is SPSSENKSTAGSASL.

This is an uncharacterized protein from Schizosaccharomyces pombe (strain 972 / ATCC 24843) (Fission yeast).